We begin with the raw amino-acid sequence, 461 residues long: Cysteine--tRNA ligase (461 aa).

Cys28 contributes to the Zn(2+) binding site. The 'HIGH' region signature appears at 30 to 40; the sequence is ITIYDLCHIGH. Zn(2+) is bound by residues Cys209, His234, and Glu238. The 'KMSKS' region motif lies at 266-270; that stretch reads KMSKS. Residue Lys269 participates in ATP binding.

The protein belongs to the class-I aminoacyl-tRNA synthetase family. Monomer. Zn(2+) serves as cofactor.

It is found in the cytoplasm. It catalyses the reaction tRNA(Cys) + L-cysteine + ATP = L-cysteinyl-tRNA(Cys) + AMP + diphosphate. The polypeptide is Cysteine--tRNA ligase (Yersinia enterocolitica serotype O:8 / biotype 1B (strain NCTC 13174 / 8081)).